Consider the following 435-residue polypeptide: Glutamyl-tRNA reductase (435 aa).

Substrate-binding positions include 49–52, Ser109, 114–116, and Gln120; these read TCNR and ETQ. Residue Cys50 is the Nucleophile of the active site. 189-194 is an NADP(+) binding site; it reads GAGEMS.

The protein belongs to the glutamyl-tRNA reductase family. Homodimer.

It catalyses the reaction (S)-4-amino-5-oxopentanoate + tRNA(Glu) + NADP(+) = L-glutamyl-tRNA(Glu) + NADPH + H(+). It participates in porphyrin-containing compound metabolism; protoporphyrin-IX biosynthesis; 5-aminolevulinate from L-glutamyl-tRNA(Glu): step 1/2. Its function is as follows. Catalyzes the NADPH-dependent reduction of glutamyl-tRNA(Glu) to glutamate 1-semialdehyde (GSA). In Listeria innocua serovar 6a (strain ATCC BAA-680 / CLIP 11262), this protein is Glutamyl-tRNA reductase.